A 102-amino-acid chain; its full sequence is U3-aranetoxin-Ce1a (102 aa).

Residues 1 to 21 form the signal peptide; it reads MKHLSIFFVFFCCICVMLCDA.

Belongs to the neurotoxin 20 family. Expressed by the venom gland.

It is found in the secreted. This chain is U3-aranetoxin-Ce1a, found in Caerostris extrusa (Bark spider).